Consider the following 623-residue polypeptide: NAD-dependent malic enzyme 1, mitochondrial (623 aa).

The transit peptide at 1–38 (MGIANKLRLSSSSLSRILHRRILYSSAVRSFTTSEGHR) directs the protein to the mitochondrion. Tyr-143 acts as the Proton donor in catalysis. Arg-196 contributes to the NAD(+) binding site. Lys-214 serves as the catalytic Proton acceptor. Residues Glu-285, Asp-286, and Asp-309 each coordinate a divalent metal cation. NAD(+)-binding residues include Asp-309 and Asn-464.

Belongs to the malic enzymes family. In terms of assembly, homodimer. Heterodimer of two related subunits in NAD-MEH complex. Interacts with NAD-ME2. It depends on Mg(2+) as a cofactor. Mn(2+) is required as a cofactor. Expressed in leaves, stems, flowers, and roots (at protein level).

The protein localises to the mitochondrion. The enzyme catalyses (S)-malate + NAD(+) = pyruvate + CO2 + NADH. Activated by oxaloacetate (OAA), 2-ketoglutarate, succinate and fumarate as homodimer and by OAA, 2-ketoglutarate, succinate, fumarate and coenzyme A (acetyl-CoA and CoA) as heterodimer NAD-MEH. In terms of biological role, involved in the regulation of sugars and amino acids metabolisms during the night period. This Arabidopsis thaliana (Mouse-ear cress) protein is NAD-dependent malic enzyme 1, mitochondrial (NAD-ME1).